A 407-amino-acid chain; its full sequence is 1-deoxy-D-xylulose 5-phosphate reductoisomerase (407 aa).

NADPH-binding residues include T27, G28, S29, I30, A53, R54, N55, and N140. K141 contributes to the 1-deoxy-D-xylulose 5-phosphate binding site. E142 lines the NADPH pocket. D166 lines the Mn(2+) pocket. 4 residues coordinate 1-deoxy-D-xylulose 5-phosphate: S167, E168, S192, and H215. E168 is a Mn(2+) binding site. Position 221 (G221) interacts with NADPH. 1-deoxy-D-xylulose 5-phosphate-binding residues include S228, N233, K234, and E237. A Mn(2+)-binding site is contributed by E237.

This sequence belongs to the DXR family. Mg(2+) is required as a cofactor. It depends on Mn(2+) as a cofactor.

It catalyses the reaction 2-C-methyl-D-erythritol 4-phosphate + NADP(+) = 1-deoxy-D-xylulose 5-phosphate + NADPH + H(+). Its pathway is isoprenoid biosynthesis; isopentenyl diphosphate biosynthesis via DXP pathway; isopentenyl diphosphate from 1-deoxy-D-xylulose 5-phosphate: step 1/6. Functionally, catalyzes the NADPH-dependent rearrangement and reduction of 1-deoxy-D-xylulose-5-phosphate (DXP) to 2-C-methyl-D-erythritol 4-phosphate (MEP). The protein is 1-deoxy-D-xylulose 5-phosphate reductoisomerase of Oleidesulfovibrio alaskensis (strain ATCC BAA-1058 / DSM 17464 / G20) (Desulfovibrio alaskensis).